Consider the following 447-residue polypeptide: Keratin, type I cytoskeletal 15 (447 aa).

A head region spans residues 1–93; it reads MATTFLQTSS…GGDGGLLSGN (93 aa). Residues S16, S28, S33, and S47 each carry the phosphoserine modification. A coil 1A region spans residues 94–129; the sequence is EKVTMQNLNDRLASYLDKVRALEEANTELEVKIRDW. Positions 94-406 constitute an IF rod domain; sequence EKVTMQNLND…NLLEGQDAKM (313 aa). Residue T120 is modified to Phosphothreonine. A linker 1 region spans residues 130 to 148; that stretch reads YQKQSPASPDRDYSHYFKT. The tract at residues 149–240 is coil 1B; that stretch reads MEEIRDKILA…KNHEEEMKEF (92 aa). The interval 241 to 260 is linker 12; the sequence is SSQLAGQVNVEMDAAPGVDL. The coil 2 stretch occupies residues 261–402; it reads TRMLAEMREQ…STYRNLLEGQ (142 aa). K289 is covalently cross-linked (Glycyl lysine isopeptide (Lys-Gly) (interchain with G-Cter in SUMO2)). Phosphothreonine occurs at positions 290 and 312. Residues 403-447 are tail; the sequence is DAKMAAIGVREASLRGGSSGGGSNFHISVEESVDGKVVSSRKRES. K438 is covalently cross-linked (Glycyl lysine isopeptide (Lys-Gly) (interchain with G-Cter in SUMO1); alternate). K438 is covalently cross-linked (Glycyl lysine isopeptide (Lys-Gly) (interchain with G-Cter in SUMO2); alternate).

The protein belongs to the intermediate filament family. In terms of assembly, heterotetramer of two type I and two type II keratins. Forms a heterodimer with KRT14. Interacts with NOD2.

The protein is Keratin, type I cytoskeletal 15 of Rattus norvegicus (Rat).